The primary structure comprises 83 residues: Mu-theraphotoxin-Hhn2j 1 (83 aa).

Positions 1-21 are cleaved as a signal peptide; the sequence is MKASMFLALAGLVLLFVVGYA. A propeptide spanning residues 22–48 is cleaved from the precursor; sequence SESEEKEFPIELLSKIFAVDVFKGEER. 3 cysteine pairs are disulfide-bonded: C50/C65, C57/C70, and C64/C77. A Leucine amide modification is found at L81.

It belongs to the neurotoxin 10 (Hwtx-1) family. 15 (Hntx-3) subfamily. Monomer. As to expression, expressed by the venom gland.

Its subcellular location is the secreted. Lethal neurotoxin. Selectively blocks tetrodotoxin-sensitive voltage-gated sodium channels (Nav). Does not affect tetrodotoxin-resistant voltage-gated sodium channels or calcium channels. This chain is Mu-theraphotoxin-Hhn2j 1, found in Cyriopagopus hainanus (Chinese bird spider).